The sequence spans 228 residues: MVGYSGEHFIFNVVKYMDILNFYIYGFVSLFITIDPIGLIPIVHSLTYPYPKEQRIRIIKKAIISSTVVLLLFALFGNYIFGYFGITIDAFRVAGGILLFKIAWDMLHAEIPKTKHKPDERLDLEDIDSIVYVPLAIPLISGPGAITTTMILISKTQSILEKGVVVLSILSAMLVSGIILSLTDFIIRRVNIYGINAFVRIMGLLLVAISVQIIFTGIVGLYNSISVQ.

Helical transmembrane passes span 22–42 (FYIY…LIPI), 68–88 (VVLL…GITI), 133–153 (VPLA…MILI), 163–183 (GVVV…LSLT), and 201–221 (IMGL…IVGL).

It belongs to the UPF0056 (MarC) family.

It localises to the cell membrane. This is UPF0056 membrane protein MJ0972 from Methanocaldococcus jannaschii (strain ATCC 43067 / DSM 2661 / JAL-1 / JCM 10045 / NBRC 100440) (Methanococcus jannaschii).